Reading from the N-terminus, the 158-residue chain is Crossover junction endodeoxyribonuclease RuvC (158 aa).

Catalysis depends on residues aspartate 7, glutamate 66, and aspartate 139. Residues aspartate 7, glutamate 66, and aspartate 139 each coordinate Mg(2+).

Belongs to the RuvC family. Homodimer which binds Holliday junction (HJ) DNA. The HJ becomes 2-fold symmetrical on binding to RuvC with unstacked arms; it has a different conformation from HJ DNA in complex with RuvA. In the full resolvosome a probable DNA-RuvA(4)-RuvB(12)-RuvC(2) complex forms which resolves the HJ. Mg(2+) is required as a cofactor.

Its subcellular location is the cytoplasm. The catalysed reaction is Endonucleolytic cleavage at a junction such as a reciprocal single-stranded crossover between two homologous DNA duplexes (Holliday junction).. Functionally, the RuvA-RuvB-RuvC complex processes Holliday junction (HJ) DNA during genetic recombination and DNA repair. Endonuclease that resolves HJ intermediates. Cleaves cruciform DNA by making single-stranded nicks across the HJ at symmetrical positions within the homologous arms, yielding a 5'-phosphate and a 3'-hydroxyl group; requires a central core of homology in the junction. The consensus cleavage sequence is 5'-(A/T)TT(C/G)-3'. Cleavage occurs on the 3'-side of the TT dinucleotide at the point of strand exchange. HJ branch migration catalyzed by RuvA-RuvB allows RuvC to scan DNA until it finds its consensus sequence, where it cleaves and resolves the cruciform DNA. The protein is Crossover junction endodeoxyribonuclease RuvC of Campylobacter jejuni subsp. jejuni serotype O:6 (strain 81116 / NCTC 11828).